The primary structure comprises 95 residues: Aspartyl/glutamyl-tRNA(Asn/Gln) amidotransferase subunit C (95 aa).

It belongs to the GatC family. Heterotrimer of A, B and C subunits.

It catalyses the reaction L-glutamyl-tRNA(Gln) + L-glutamine + ATP + H2O = L-glutaminyl-tRNA(Gln) + L-glutamate + ADP + phosphate + H(+). The enzyme catalyses L-aspartyl-tRNA(Asn) + L-glutamine + ATP + H2O = L-asparaginyl-tRNA(Asn) + L-glutamate + ADP + phosphate + 2 H(+). Its function is as follows. Allows the formation of correctly charged Asn-tRNA(Asn) or Gln-tRNA(Gln) through the transamidation of misacylated Asp-tRNA(Asn) or Glu-tRNA(Gln) in organisms which lack either or both of asparaginyl-tRNA or glutaminyl-tRNA synthetases. The reaction takes place in the presence of glutamine and ATP through an activated phospho-Asp-tRNA(Asn) or phospho-Glu-tRNA(Gln). This is Aspartyl/glutamyl-tRNA(Asn/Gln) amidotransferase subunit C from Roseobacter denitrificans (strain ATCC 33942 / OCh 114) (Erythrobacter sp. (strain OCh 114)).